Here is a 331-residue protein sequence, read N- to C-terminus: Neurogenic differentiation factor 4 (331 aa).

The tract at residues 1-80 (MSKTFVKSKE…GPKKKKMTKA (80 aa)) is disordered. Residues 52–64 (DSIEEEEEEEEDG) are compositionally biased toward acidic residues. Residues 67 to 79 (PKRRGPKKKKMTK) are compositionally biased toward basic residues. Positions 87-139 (ARRVKANARERTRMHGLNDALDNLRRVMPCYSKTQKLSKIETLRLARNYIWAL) constitute a bHLH domain. The interval 246-265 (TPPYEGPLTPPLSISGNFSL) is disordered.

As to quaternary structure, efficient DNA binding requires dimerization with another bHLH protein. In terms of processing, serine or threonine phosphorylation within the basic region may regulate neurogenic activity.

Its subcellular location is the nucleus. Its function is as follows. Probably acts as a transcriptional activator. Mediates neuronal differentiation. Required for the regulation of amacrine cell fate specification in the retina. This chain is Neurogenic differentiation factor 4 (NEUROD4), found in Homo sapiens (Human).